Consider the following 531-residue polypeptide: Zinc finger C2HC domain-containing protein 1C (531 aa).

A disordered region spans residues Met-16–Leu-45. The segment covering Tyr-35–Ser-44 has biased composition (low complexity). Residues Val-209–Ile-264 are a coiled coil. Disordered stretches follow at residues Phe-290–Asp-318 and Asn-334–Gly-387. The segment covering Glu-293–Glu-305 has biased composition (basic and acidic residues). The span at Arg-306 to Gln-315 shows a compositional bias: polar residues. Residues Lys-335–Met-345 are compositionally biased toward basic and acidic residues. The span at Ser-366 to Ser-380 shows a compositional bias: low complexity. 2 consecutive C2HC/C3H-type zinc fingers follow at residues Gln-385–Ser-414 and Asp-493–Arg-522. Residues Cys-389, Cys-392, His-404, Cys-408, Cys-497, Cys-500, His-512, and Cys-516 each coordinate Zn(2+).

This sequence belongs to the ZC2HC1 family. The cofactor is Zn(2+).

This chain is Zinc finger C2HC domain-containing protein 1C (ZC2HC1C), found in Macaca fascicularis (Crab-eating macaque).